A 276-amino-acid polypeptide reads, in one-letter code: Lyso-ornithine lipid O-acyltransferase (276 aa).

Residues 25–47 (LALRGGAMALVLMAGLTLHLAVR) form a helical membrane-spanning segment.

It belongs to the 1-acyl-sn-glycerol-3-phosphate acyltransferase family. OlsA subfamily.

It localises to the membrane. The catalysed reaction is a lyso-ornithine lipid + a fatty acyl-[ACP] = an N(2)-[(3R)-3-(acyloxy)acyl]-L-ornithine lipid + holo-[ACP]. It carries out the reaction a fatty acyl-[ACP] + a 1-acyl-sn-glycero-3-phosphate = a 1,2-diacyl-sn-glycero-3-phosphate + holo-[ACP]. Its pathway is lipid metabolism. It participates in phospholipid metabolism. Catalyzes the second step in the formation of ornithine lipids, which are phosphorus-free membrane lipids. Uses acyl-acyl carrier protein (acyl-AcpP) as an acyl donor and converts lyso-ornithine lipid (LOL) into ornithine lipid (OL). It can also act as an alternate acyl-sn-glycerol-3-phosphate acyltransferase (AGPAT) to ensure glycerophospholipid production. The chain is Lyso-ornithine lipid O-acyltransferase from Rhodobacter capsulatus (strain ATCC BAA-309 / NBRC 16581 / SB1003).